A 276-amino-acid polypeptide reads, in one-letter code: Undecaprenyl-diphosphatase 1 (276 aa).

The next 7 helical transmembrane spans lie at 4–24 (ILICKALILGVVEGLTEFLPV), 46–63 (TFDVVIQFGAILAVCWEY), 83–103 (FTLNVVIATIPAIALGLLFEK), 108–128 (VLFSPVPVAFALVVGGAIILW), 187–207 (VATEFSFFLAIPIIFGATLYE), 217–237 (VDSLGLFVLGAVAAFVSAFVC), and 252–272 (VFAWYRIAFGLFVLLVGYSGW).

This sequence belongs to the UppP family.

The protein resides in the cell inner membrane. It catalyses the reaction di-trans,octa-cis-undecaprenyl diphosphate + H2O = di-trans,octa-cis-undecaprenyl phosphate + phosphate + H(+). In terms of biological role, catalyzes the dephosphorylation of undecaprenyl diphosphate (UPP). Confers resistance to bacitracin. The polypeptide is Undecaprenyl-diphosphatase 1 (Burkholderia lata (strain ATCC 17760 / DSM 23089 / LMG 22485 / NCIMB 9086 / R18194 / 383)).